Here is a 356-residue protein sequence, read N- to C-terminus: Alpha-N-acetylneuraminide alpha-2,8-sialyltransferase (356 aa).

Topologically, residues 1-29 (MSPCGRARRQTSRGAMAVLAWKFPRTRLP) are cytoplasmic. Residues 30-48 (MGASALCVVVLCWLYIFPV) form a helical; Signal-anchor for type II membrane protein membrane-spanning segment. Topologically, residues 49-356 (YRLPNEKEIV…CEDTSLQPTS (308 aa)) are lumenal. N71 and N119 each carry an N-linked (GlcNAc...) asparagine glycan. Disulfide bonds link C138–C287 and C152–C347. Positions 143 and 166 each coordinate CMP-N-acetyl-beta-neuraminate. Residues N214 and N245 are each glycosylated (N-linked (GlcNAc...) asparagine). The CMP-N-acetyl-beta-neuraminate site is built by S274, T275, G276, W296, and H310. Residue H322 is the Proton donor/acceptor of the active site.

This sequence belongs to the glycosyltransferase 29 family. In terms of tissue distribution, strongly expressed in melanoma cell lines, adult and fetal brain and to a lesser extent in adult and fetal lung.

It localises to the golgi apparatus membrane. The enzyme catalyses an N-acetyl-alpha-neuraminyl-(2-&gt;3)-beta-D-galactosyl derivative + CMP-N-acetyl-beta-neuraminate = an N-acetyl-alpha-neuraminyl-(2-&gt;8)-N-acetyl-alpha-neuraminyl-(2-&gt;3)-beta-D-galactosyl derivative + CMP + H(+). It carries out the reaction a ganglioside GM3 (d18:1(4E)) + CMP-N-acetyl-beta-neuraminate = a ganglioside GD3 (d18:1(4E)) + CMP + H(+). It catalyses the reaction a ganglioside GD3 (d18:1(4E)) + CMP-N-acetyl-beta-neuraminate = a ganglioside GT3 (d18:1(4E)) + CMP + H(+). The catalysed reaction is a ganglioside GD1a (d18:1(4E)) + CMP-N-acetyl-beta-neuraminate = a ganglioside GT1a (d18:1(4E)) + CMP + H(+). The enzyme catalyses a ganglioside GT1b (d18:1(4E)) + CMP-N-acetyl-beta-neuraminate = a ganglioside GQ1b (d18:1(4E)) + CMP + H(+). It carries out the reaction a ganglioside GM1b (d18:1(4E)) + CMP-N-acetyl-beta-neuraminate = a ganglioside GD1c (d18:1(4E)) + CMP + H(+). It catalyses the reaction a ganglioside GD3 + CMP-N-acetyl-beta-neuraminate = a ganglioside GT3 + CMP + H(+). The catalysed reaction is [alpha-N-acetylneuraminyl-(2-&gt;8)](n)-alpha-N-acetylneuraminyl-(2-&gt;8)-alpha-N-acetylneuraminyl-(2-&gt;3)-beta-D-galactosyl-(1-&gt;4)-beta-D-glucosyl-(1&lt;-&gt;1)-ceramide + CMP-N-acetyl-beta-neuraminate = [alpha-N-acetylneuraminyl-(2-&gt;8)](n+1)-alpha-N-acetylneuraminyl-(2-&gt;8)-alpha-N-acetylneuraminyl-(2-&gt;3)-beta-D-galactosyl-(1-&gt;4)-beta-D-glucosyl-(1&lt;-&gt;1)-ceramide + CMP + H(+). It functions in the pathway protein modification; protein glycosylation. It participates in lipid metabolism; sphingolipid metabolism. Functionally, catalyzes the addition of sialic acid in alpha 2,8-linkage to the sialic acid moiety of the ganglioside GM3 to form ganglioside GD3; gangliosides are a subfamily of complex glycosphingolipds that contain one or more residues of sialic acid. Can catalyze the addition of a second alpha-2,8-sialic acid to GD3 to form GT3. Can use GM1b, GD1a and GT1b as acceptor substrates to synthesize GD1c, GT1a and GQ1b respectively. Can synthesize unusual tetra- and pentasialylated lactosylceramide derivatives identified as GQ3 (II3Neu5Ac4-Gg2Cer) and GP3 (II3Neu5Ac5-Gg2Cer) in breast cancer cells. The polypeptide is Alpha-N-acetylneuraminide alpha-2,8-sialyltransferase (Homo sapiens (Human)).